Here is a 352-residue protein sequence, read N- to C-terminus: Rhodopsin (352 aa).

The Extracellular segment spans residues M1–K36. 2 N-linked (GlcNAc...) asparagine glycosylation sites follow: N2 and N15. A helical membrane pass occupies residues Y37 to V61. The Cytoplasmic portion of the chain corresponds to T62–N73. The chain crosses the membrane as a helical span at residues Y74–Y96. The Extracellular segment spans residues T97–C110. A disulfide bridge connects residues C110 and C187. The chain crosses the membrane as a helical span at residues Y111 to I133. The short motif at E134–Y136 is the 'Ionic lock' involved in activated form stabilization element. Residues E134–H152 are Cytoplasmic-facing. The helical transmembrane segment at A153–V173 threads the bilayer. Residues G174–S202 lie on the Extracellular side of the membrane. The helical transmembrane segment at F203 to G224 threads the bilayer. The Cytoplasmic portion of the chain corresponds to R225 to R252. The chain crosses the membrane as a helical span at residues M253–Y274. Residues I275–V286 are Extracellular-facing. The chain crosses the membrane as a helical span at residues F287–V308. Residue K296 is modified to N6-(retinylidene)lysine. Over M309–A352 the chain is Cytoplasmic. S-palmitoyl cysteine attachment occurs at residues C322 and C323. Residues E332–A352 are disordered. Over residues T335–A352 the composition is skewed to low complexity.

Belongs to the G-protein coupled receptor 1 family. Opsin subfamily. Post-translationally, contains one covalently linked retinal chromophore. Upon light absorption, the covalently bound 11-cis-retinal is converted to all-trans-retinal. After hydrolysis of the Schiff base and release of the covalently bound all-trans-retinal, active rhodopsin is regenerated by binding of a fresh molecule of 11-cis-retinal. In terms of tissue distribution, expressed in rod-shaped photoreceptor cells in the retina that mediate vision in dim ligh (at protein level).

It localises to the membrane. The protein resides in the cell projection. Its subcellular location is the cilium. It is found in the photoreceptor outer segment. Functionally, photoreceptor required for image-forming vision at low light intensity. Required for photoreceptor cell viability after birth. Light-induced isomerization of 11-cis to all-trans retinal triggers a conformational change that activates signaling via G-proteins. Subsequent receptor phosphorylation mediates displacement of the bound G-protein alpha subunit by arrestin and terminates signaling. This Alligator mississippiensis (American alligator) protein is Rhodopsin (RHO).